Reading from the N-terminus, the 33-residue chain is Cytochrome b6-f complex subunit 8 (33 aa).

Residues 2–22 (LFTVAWASLAAMFSFSIAMVV) traverse the membrane as a helical segment.

Belongs to the PetN family. In terms of assembly, the 4 large subunits of the cytochrome b6-f complex are cytochrome b6, subunit IV (17 kDa polypeptide, PetD), cytochrome f and the Rieske protein, while the 4 small subunits are PetG, PetL, PetM and PetN. The complex functions as a dimer.

Its subcellular location is the cellular thylakoid membrane. Its function is as follows. Component of the cytochrome b6-f complex, which mediates electron transfer between photosystem II (PSII) and photosystem I (PSI), cyclic electron flow around PSI, and state transitions. The chain is Cytochrome b6-f complex subunit 8 from Parasynechococcus marenigrum (strain WH8102).